Reading from the N-terminus, the 101-residue chain is Pore-forming peptide amoebapore C (101 aa).

The N-terminal stretch at 1–24 (MKLFVLLCVFVLCLASQEKQQDRE) is a signal peptide. Residues 25 to 101 (IPVLCPVCTS…KLICGLIHAC (77 aa)) enclose the Saposin B-type domain. 3 disulfides stabilise this stretch: C29–C101, C32–C95, and C59–C70.

Monomer. Homodimer. Hexamer; formed during insertion in the membrane.

Its subcellular location is the cytoplasmic granule. Forms pores in the cell membrane of host cells. Has antibacterial activity against M.luteus, no activity against E.coli. Implicated in the cytolytic activity of the parasite. In Entamoeba histolytica (strain ATCC 30459 / HM-1:IMSS / ABRM), this protein is Pore-forming peptide amoebapore C.